Here is a 430-residue protein sequence, read N- to C-terminus: Adenylosuccinate synthetase (430 aa).

GTP-binding positions include 12 to 18 (GDEGKGK) and 40 to 42 (GHT). Residue D13 is the Proton acceptor of the active site. D13 and G40 together coordinate Mg(2+). IMP is bound by residues 13-16 (DEGK), 38-41 (NAGH), T128, R142, Q223, T238, and R302. The active-site Proton donor is H41. Residue 298–304 (TTTGRPR) coordinates substrate. GTP-binding positions include R304, 330–332 (LLD), and 412–414 (SVG).

It belongs to the adenylosuccinate synthetase family. As to quaternary structure, homodimer. It depends on Mg(2+) as a cofactor.

Its subcellular location is the cytoplasm. The catalysed reaction is IMP + L-aspartate + GTP = N(6)-(1,2-dicarboxyethyl)-AMP + GDP + phosphate + 2 H(+). It participates in purine metabolism; AMP biosynthesis via de novo pathway; AMP from IMP: step 1/2. Plays an important role in the de novo pathway of purine nucleotide biosynthesis. Catalyzes the first committed step in the biosynthesis of AMP from IMP. The sequence is that of Adenylosuccinate synthetase from Listeria welshimeri serovar 6b (strain ATCC 35897 / DSM 20650 / CCUG 15529 / CIP 8149 / NCTC 11857 / SLCC 5334 / V8).